A 245-amino-acid polypeptide reads, in one-letter code: Collagen triple helix repeat-containing protein 1 (245 aa).

The N-terminal stretch at 1–32 (MHPQGRAASPQLLLGLFLVLLLLLQLSAPSSA) is a signal peptide. Residues 59 to 92 (QGPAGVPGRDGSPGANGIPGTPGIPGRDGFKGEK) form the Collagen-like domain. Positions 64-87 (VPGRDGSPGANGIPGTPGIPGRDG) are disordered. A glycan (N-linked (GlcNAc...) asparagine) is linked at asparagine 188.

In terms of processing, N-glycosylated. In terms of tissue distribution, expressed after injury in the carotid arteries (at protein level). Expressed in brain, lung, and after injury in fibroblasts of the adventitia and the neointima of the arteries.

It is found in the secreted. The protein localises to the extracellular space. The protein resides in the extracellular matrix. Its overexpression in smooth muscle cell lines increases their migratory ability and inhibits collagen type I expression. May act as a negative regulator of collagen matrix deposition. The polypeptide is Collagen triple helix repeat-containing protein 1 (Cthrc1) (Rattus norvegicus (Rat)).